The sequence spans 155 residues: MSKASVYEAKTESFIQPILDSMNFELVDVEYVKEGGMNYLRAYIDKEGGITVDDCEVVARQMNEILDREDYIPDSYTFEVSSPGLGRPLKKEKDYVRNMNKEIEIRTYRAINKSKEFYGLLKAYDKDTVTITDEDGNETTFNKSDIALIRQALDF.

Belongs to the RimP family.

Its subcellular location is the cytoplasm. Required for maturation of 30S ribosomal subunits. This Agathobacter rectalis (strain ATCC 33656 / DSM 3377 / JCM 17463 / KCTC 5835 / VPI 0990) (Eubacterium rectale) protein is Ribosome maturation factor RimP.